The following is an 80-amino-acid chain: Small ribosomal subunit protein uS17 (80 aa).

It belongs to the universal ribosomal protein uS17 family. In terms of assembly, part of the 30S ribosomal subunit.

Functionally, one of the primary rRNA binding proteins, it binds specifically to the 5'-end of 16S ribosomal RNA. This Cereibacter sphaeroides (strain ATCC 17029 / ATH 2.4.9) (Rhodobacter sphaeroides) protein is Small ribosomal subunit protein uS17.